We begin with the raw amino-acid sequence, 126 residues long: Glycine cleavage system H protein (126 aa).

The 83-residue stretch at 21–103 (TVTIGISEHA…YEGGWIVKVK (83 aa)) folds into the Lipoyl-binding domain. The residue at position 62 (Lys-62) is an N6-lipoyllysine.

Belongs to the GcvH family. The glycine cleavage system is composed of four proteins: P, T, L and H. (R)-lipoate is required as a cofactor.

Functionally, the glycine cleavage system catalyzes the degradation of glycine. The H protein shuttles the methylamine group of glycine from the P protein to the T protein. The protein is Glycine cleavage system H protein of Vibrio parahaemolyticus serotype O3:K6 (strain RIMD 2210633).